We begin with the raw amino-acid sequence, 863 residues long: MTSAQLRAAFLDFFRERGHEVVPSSPLVPANDPTLLFTNAGMVPFKEVFLGREQRGYQRATSSQRCVRAGGKHNDLENVGYTARHHTFFEMLGNFSFGDYFKRDAIRYAWSFLTEVVELPPERLWVTVYEDDDEAAQIWLEEIGVDPARFRRIGAHDNFWSMGDTGPCGPCSEVFYDHGPEVPGGPPGSDEEDGDRYIEVWNLVFMQYDRDAEGNLNPLPSPSIDTGMGLERLAAVLQGVHDNFETDLFTPLIDAAGEIAGVSDRRKPSLKVVADHIRACSFLIVDGVLPSTEGRGYVLRRIIRRAVRHGYQLGIDEPFFYRLVDPLDAVMGEAFPELRDRREFVEKILFQEEKRFRETLEDGLALLDEYLGGNDSGVIDGEVVFKLYDTHGFPVDLTADIARERNLEVDYQGFEARMAEQRERARAASRFGGAREEVVDAGESRFTGYETLEDVGSVIGLYQDGRSVQRLQPGEEGMVVLDRTPFYAESGGQVGDRGEILANGLRFRVADTVKQGEAHGHLGRLESGELGVGDQVTARVDRGTREATVRNHSATHLLHAALREILGDHVQQKGSLVAPDRLRFDFSHYEAPSREDLERIEARVNQEILTNHPVEAAHMAYEEAVQVGAMALFGEKYGDTVRVISLGDYSQELCGGTHAARTGDIGLFKIIDETGVAGGVRRIEAITGERAIGWVQEAEGRLNRLADLLRVGPDNLVMKVEQLSERTREQEKEIERLKQKLATQAGRSLLDDAGEVAGVRFLATCVEGGGKGLRDTLDQLKNQLGSGVIVLAAVQGEKVQLVAGVTKDLTDRLAAGDLVNHVAAQVGGRGGGRADFAQAGGKDPSHVNDALASVEAWIKDNLT.

Zn(2+)-binding residues include H552, H556, C654, and H658.

Belongs to the class-II aminoacyl-tRNA synthetase family. The cofactor is Zn(2+).

The protein localises to the cytoplasm. The catalysed reaction is tRNA(Ala) + L-alanine + ATP = L-alanyl-tRNA(Ala) + AMP + diphosphate. Functionally, catalyzes the attachment of alanine to tRNA(Ala) in a two-step reaction: alanine is first activated by ATP to form Ala-AMP and then transferred to the acceptor end of tRNA(Ala). Also edits incorrectly charged Ser-tRNA(Ala) and Gly-tRNA(Ala) via its editing domain. The polypeptide is Alanine--tRNA ligase (Halorhodospira halophila (strain DSM 244 / SL1) (Ectothiorhodospira halophila (strain DSM 244 / SL1))).